A 358-amino-acid polypeptide reads, in one-letter code: Protein Wnt-8b (358 aa).

The first 23 residues, 1–23, serve as a signal peptide directing secretion; it reads MFMHLEVYYYAFILMAHMKTCCG. Cys-55 and Cys-66 are oxidised to a cystine. Asn-104 is a glycosylation site (N-linked (GlcNAc...) asparagine). 10 disulfides stabilise this stretch: Cys-105–Cys-113, Cys-115–Cys-133, Cys-181–Cys-195, Cys-183–Cys-190, Cys-257–Cys-295, Cys-273–Cys-288, Cys-292–Cys-334, Cys-310–Cys-325, Cys-312–Cys-322, and Cys-317–Cys-318. A lipid anchor (O-palmitoleoyl serine) is attached at Ser-187. 2 N-linked (GlcNAc...) asparagine glycosylation sites follow: Asn-260 and Asn-279. An N-linked (GlcNAc...) asparagine glycan is attached at Asn-345.

This sequence belongs to the Wnt family. Post-translationally, palmitoleoylation is required for efficient binding to frizzled receptors. Depalmitoleoylation leads to Wnt signaling pathway inhibition. In terms of processing, proteolytic processing by tiki1 and tiki2 promotes oxidation and formation of large disulfide-bond oligomers, leading to inactivation of wnt8b. Hindbrain r1, 2 and 5.

The protein localises to the secreted. Its subcellular location is the extracellular space. It localises to the extracellular matrix. Its function is as follows. Ligand for fzd8a, a member of the G-protein coupled frizzled receptor family. May play a role in the establishment of polarity in the nervous system. Involved in canonical Wnt signaling pathway. During embryonic development, required for the acquisition of caudal diencephalic fate. Antagonizes eye specification. In Danio rerio (Zebrafish), this protein is Protein Wnt-8b (wnt8b).